The sequence spans 222 residues: Flagellar L-ring protein (222 aa).

The signal sequence occupies residues 1-21 (MQTFLYPRTWLILGLLLLGSG). A lipid anchor (N-palmitoyl cysteine) is attached at cysteine 22. Cysteine 22 carries S-diacylglycerol cysteine lipidation.

This sequence belongs to the FlgH family. As to quaternary structure, the basal body constitutes a major portion of the flagellar organelle and consists of four rings (L,P,S, and M) mounted on a central rod.

The protein localises to the cell outer membrane. The protein resides in the bacterial flagellum basal body. Its function is as follows. Assembles around the rod to form the L-ring and probably protects the motor/basal body from shearing forces during rotation. The chain is Flagellar L-ring protein from Methylobacillus flagellatus (strain ATCC 51484 / DSM 6875 / VKM B-1610 / KT).